The following is a 278-amino-acid chain: Octanoyltransferase LipM (278 aa).

The BPL/LPL catalytic domain maps to 33–248 (KKMPPTIRFY…GFEKGLDVEL (216 aa)). Cys150 (acyl-thioester intermediate) is an active-site residue.

This sequence belongs to the octanoyltransferase LipM family. As to quaternary structure, monomer.

The catalysed reaction is octanoyl-[ACP] + L-lysyl-[protein] = N(6)-octanoyl-L-lysyl-[protein] + holo-[ACP] + H(+). The protein operates within protein modification; protein lipoylation via endogenous pathway; protein N(6)-(lipoyl)lysine from octanoyl-[acyl-carrier-protein]. Catalyzes the transfer of endogenously produced octanoic acid from octanoyl-acyl-carrier-protein onto the lipoyl domain of GcvH, an intermediate carrier during protein lipoylation. This chain is Octanoyltransferase LipM, found in Bacillus anthracis.